A 289-amino-acid polypeptide reads, in one-letter code: Energy-coupling factor transporter ATP-binding protein EcfA2 (289 aa).

The ABC transporter domain occupies 7–251 (IILDNVSYTY…IELLTKIEID (245 aa)). 44–51 (GTTGSGKS) contributes to the ATP binding site.

The protein belongs to the ABC transporter superfamily. Energy-coupling factor EcfA family. In terms of assembly, forms a stable energy-coupling factor (ECF) transporter complex composed of 2 membrane-embedded substrate-binding proteins (S component), 2 ATP-binding proteins (A component) and 2 transmembrane proteins (T component).

It localises to the cell membrane. In terms of biological role, ATP-binding (A) component of a common energy-coupling factor (ECF) ABC-transporter complex. Unlike classic ABC transporters this ECF transporter provides the energy necessary to transport a number of different substrates. This chain is Energy-coupling factor transporter ATP-binding protein EcfA2, found in Mycoplasma capricolum subsp. capricolum (strain California kid / ATCC 27343 / NCTC 10154).